We begin with the raw amino-acid sequence, 793 residues long: MAGWIQAQQLQGDALRQMQVLYGQHFPIEVRHYLAQWIESQPWDAIDLDNPQDRGQATQLLEGLVQELQKKAEHQVGEDGFLLKIKLGHYATQLQNTYDRCPMELVRCIRHILYNEQRLVREANNCSSPAGVLVDAMSQKHLQINQRFEELRLITQDTENELKKLQQTQEYFIIQYQESLRIQAQFAQLGQLNPQERMSRETALQQKQVSLETWLQREAQTLQQYRVELAEKHQKTLQLLRKQQTIILDDELIQWKRRQQLAGNGGPPEGSLDVLQSWCEKLAEIIWQNRQQIRRAEHLCQQLPIPGPVEEMLAEVNATITDIISALVTSTFIIEKQPPQVLKTQTKFAATVRLLVGGKLNVHMNPPQVKATIISEQQAKSLLKNENTRNECSGEILNNCCVMEYHQATGTLSAHFRNMSLKRIKRADRRGAESVTEEKFTVLFESQFSVGSNELVFQVKTLSLPVVVIVHGSQDHNATATVLWDNAFAEPGRVPFAVPDKVLWPQLCEALNMKFKAEVQSNRGLTKENLVFLAQKLFNISSNHLEDYNSMSVSWSQFNRENLPGWNYTFWQWFDGVMEVLKKHHKPHWNDGAILGFVNKQQAHDLLINKPDGTFLLRFSDSEIGGITIAWKFDSPDRNLWNLKPFTTRDFSIRSLADRLGDLNYLIYVFPDRPKDEVFAKYYTPVLAKAVDGYVKPQIKQVVPEFVNASTDAGASATYMDQAPSPVVCPQPHYNMYPPNPDPVLDQDGEFDLDESMDVARHVEELLRRPMDSLDARLSPPAGLFTSARSSLS.

Phosphotyrosine is present on Tyr-90. Ser-128 is modified (phosphoserine). In terms of domain architecture, SH2 spans 589–686 (WNDGAILGFV…EVFAKYYTPV (98 aa)). A phosphotyrosine mark is found at Tyr-682 and Tyr-694. Phosphoserine is present on Ser-779.

This sequence belongs to the transcription factor STAT family. Forms a homodimer or a heterodimer with a related family member. Interacts with NCOA1 and SOCS7. Binds NR3C1. Interacts with ERBB4. Interacts with EBF4. Interacts with CD69. ISGylated. In terms of processing, tyrosine phosphorylated in response to KITLG/SCF, IL2, IL3, IL7, IL15, CSF2/GMCSF, GH1, PRL, EPO and THPO. Activated KIT promotes phosphorylation on tyrosine residues and subsequent translocation to the nucleus. Tyrosine phosphorylated in response to constitutively activated FGFR1, FGFR2, FGFR3 and FGFR4. Tyrosine phosphorylation is required for DNA-binding activity and dimerization. Serine phosphorylation is also required for maximal transcriptional activity. Tyrosine phosphorylated in response to signaling via activated FLT3; wild-type FLT3 results in much weaker phosphorylation than constitutively activated mutant FLT3. Alternatively, can be phosphorylated by JAK2 at Tyr-694. As to expression, in the virgin, found in most tissues except brain and muscle. During lactation, abundantly found in mammary tissue, as well as in other secretory organs such as salivary gland and seminal vesicle.

It localises to the cytoplasm. Its subcellular location is the nucleus. Its function is as follows. Carries out a dual function: signal transduction and activation of transcription. Mediates cellular responses to the cytokine KITLG/SCF and other growth factors. May mediate cellular responses to activated FGFR1, FGFR2, FGFR3 and FGFR4. Binds to the GAS element and activates PRL-induced transcription. Regulates the expression of milk proteins during lactation. The chain is Signal transducer and activator of transcription 5A (Stat5a) from Mus musculus (Mouse).